A 248-amino-acid polypeptide reads, in one-letter code: PF03932 family protein CutC (248 aa).

The protein belongs to the CutC family. Homodimer.

Its subcellular location is the cytoplasm. The protein is PF03932 family protein CutC of Escherichia coli O81 (strain ED1a).